The chain runs to 832 residues: Protein P (832 aa).

The tract at residues 1-177 (MPLSYQHFRR…FCGSPYSWEQ (177 aa)) is terminal protein domain (TP). The interval 178–335 (ELQHGAESFH…YCLSHIVNLL (158 aa)) is spacer. The segment at 241-263 (RRPFGVEPSGSGHTTNLASKSAS) is disordered. A compositionally biased stretch (polar residues) spans 251–263 (SGHTTNLASKSAS). The polymerase/reverse transcriptase domain (RT) stretch occupies residues 336–679 (EDWGPCAEHG…YLNLYPVARQ (344 aa)). The 244-residue stretch at 346–589 (EHHIRIPRTP…YSLHFMGYVI (244 aa)) folds into the Reverse transcriptase domain. Mg(2+) is bound by residues D418, D540, and D541.

The protein belongs to the hepadnaviridae P protein family.

The catalysed reaction is DNA(n) + a 2'-deoxyribonucleoside 5'-triphosphate = DNA(n+1) + diphosphate. It carries out the reaction Endonucleolytic cleavage to 5'-phosphomonoester.. Its activity is regulated as follows. Activated by host HSP70 and HSP40 in vitro to be able to bind the epsilon loop of the pgRNA. Because deletion of the RNase H region renders the protein partly chaperone-independent, the chaperones may be needed indirectly to relieve occlusion of the RNA-binding site by this domain. Inhibited by several reverse-transcriptase inhibitors: Lamivudine, Adefovir and Entecavir. Multifunctional enzyme that converts the viral RNA genome into dsDNA in viral cytoplasmic capsids. This enzyme displays a DNA polymerase activity that can copy either DNA or RNA templates, and a ribonuclease H (RNase H) activity that cleaves the RNA strand of RNA-DNA heteroduplexes in a partially processive 3'- to 5'-endonucleasic mode. Neo-synthesized pregenomic RNA (pgRNA) are encapsidated together with the P protein, and reverse-transcribed inside the nucleocapsid. Initiation of reverse-transcription occurs first by binding the epsilon loop on the pgRNA genome, and is initiated by protein priming, thereby the 5'-end of (-)DNA is covalently linked to P protein. Partial (+)DNA is synthesized from the (-)DNA template and generates the relaxed circular DNA (RC-DNA) genome. After budding and infection, the RC-DNA migrates in the nucleus, and is converted into a plasmid-like covalently closed circular DNA (cccDNA). The activity of P protein does not seem to be necessary for cccDNA generation, and is presumably released from (+)DNA by host nuclear DNA repair machinery. This chain is Protein P, found in Homo sapiens (Human).